The following is a 156-amino-acid chain: Ribosomal RNA large subunit methyltransferase H (156 aa).

Residues Leu73, Gly104, and 123 to 128 (LSRLTL) each bind S-adenosyl-L-methionine.

Belongs to the RNA methyltransferase RlmH family. Homodimer.

The protein localises to the cytoplasm. The catalysed reaction is pseudouridine(1915) in 23S rRNA + S-adenosyl-L-methionine = N(3)-methylpseudouridine(1915) in 23S rRNA + S-adenosyl-L-homocysteine + H(+). Functionally, specifically methylates the pseudouridine at position 1915 (m3Psi1915) in 23S rRNA. The sequence is that of Ribosomal RNA large subunit methyltransferase H from Thiobacillus denitrificans (strain ATCC 25259 / T1).